The chain runs to 767 residues: Ribonucleoside-diphosphate reductase large subunit (767 aa).

Residues threonine 176, 191 to 192 (SC), glycine 222, 392 to 396 (NLCAE), and 578 to 582 (PTAGT) contribute to the substrate site. A disulfide bridge connects residues cysteine 192 and cysteine 408. Asparagine 392 (proton acceptor) is an active-site residue. The active-site Cysteine radical intermediate is the cysteine 394. The active-site Proton acceptor is glutamate 396.

This sequence belongs to the ribonucleoside diphosphate reductase large chain family. In terms of assembly, heterotetramer composed of a homodimer of the large subunit (R1) and a homodimer of the small subunit (R2). Larger multisubunit protein complex are also active, composed of (R1)n(R2)n.

It carries out the reaction a 2'-deoxyribonucleoside 5'-diphosphate + [thioredoxin]-disulfide + H2O = a ribonucleoside 5'-diphosphate + [thioredoxin]-dithiol. Ribonucleoside-diphosphate reductase holoenzyme provides the precursors necessary for viral DNA synthesis. Allows virus growth in non-dividing cells, as well as reactivation from latency in infected hosts. Catalyzes the biosynthesis of deoxyribonucleotides from the corresponding ribonucleotides. The sequence is that of Ribonucleoside-diphosphate reductase large subunit from Saimiri sciureus (Common squirrel monkey).